The sequence spans 417 residues: Gamma-glutamyl phosphate reductase (417 aa).

This sequence belongs to the gamma-glutamyl phosphate reductase family.

The protein localises to the cytoplasm. The enzyme catalyses L-glutamate 5-semialdehyde + phosphate + NADP(+) = L-glutamyl 5-phosphate + NADPH + H(+). Its pathway is amino-acid biosynthesis; L-proline biosynthesis; L-glutamate 5-semialdehyde from L-glutamate: step 2/2. Its function is as follows. Catalyzes the NADPH-dependent reduction of L-glutamate 5-phosphate into L-glutamate 5-semialdehyde and phosphate. The product spontaneously undergoes cyclization to form 1-pyrroline-5-carboxylate. This chain is Gamma-glutamyl phosphate reductase, found in Escherichia coli O8 (strain IAI1).